Consider the following 707-residue polypeptide: uncharacterized protein (707 aa).

2 disordered regions span residues 15–122 (ALAK…LESY) and 667–707 (ESVQ…DIDE). Basic and acidic residues-rich tracts occupy residues 18 to 32 (KKND…DKGI) and 40 to 52 (EGKD…DVEK). Residue S112 is modified to Phosphoserine. Residues 659-700 (EEQRKLIRESVQQDQEHKEQMRQKKKQALKSDDIELDDLSEE) are a coiled coil. The segment covering 692 to 707 (IELDDLSEEEAEDIDE) has biased composition (acidic residues).

The protein belongs to the NOC2 family.

It localises to the nucleus. Its subcellular location is the nucleolus. This is an uncharacterized protein from Schizosaccharomyces pombe (strain 972 / ATCC 24843) (Fission yeast).